The primary structure comprises 120 residues: Host cell factor C1 regulator 1 (120 aa).

Positions 1-30 (MILQQPLERGPPSRDPRATTGVTRGLNASL) are disordered. The span at 20-30 (TGVTRGLNASL) shows a compositional bias: polar residues. The interval 58–61 (DHPY) is interaction with HCFC1. The short motif at 92–101 (IPEALRLLRL) is the Nuclear export signal element.

Interacts with HCFC1.

Its subcellular location is the cytoplasm. It is found in the nucleus. Functionally, regulates HCFC1 activity by modulating its subcellular localization. Overexpression of HCFC1R1 leads to accumulation of HCFC1 in the cytoplasm. HCFC1R1-mediated export may provide the pool of cytoplasmic HCFC1 required for import of virion-derived VP16 into the nucleus. This chain is Host cell factor C1 regulator 1 (Hcfc1r1), found in Mus musculus (Mouse).